Reading from the N-terminus, the 202-residue chain is Putative pituitary tumor-transforming gene 3 protein (202 aa).

Positions 61–64 match the D-box motif; the sequence is RKAL. The tract at residues 67–92 is disordered; it reads VNRATEKSVKTNGPLKQKQPSFSAKK. Residues 163–173 carry the SH3-binding motif; sequence PPLPLKMPSPP.

This sequence belongs to the securin family.

It is found in the cytoplasm. The protein localises to the nucleus. The sequence is that of Putative pituitary tumor-transforming gene 3 protein (PTTG3) from Pongo pygmaeus (Bornean orangutan).